The following is a 272-amino-acid chain: 3-hydroxyanthranilate 3,4-dioxygenase (272 aa).

The tract at residues 1–154 is domain A (catalytic); the sequence is MMEWIDENSS…SEEHKTGKPS (154 aa). Arg38 contacts O2. Residues His42, Glu48, and His86 each coordinate Fe cation. Glu48 provides a ligand contact to substrate. Substrate-binding residues include Arg90 and Glu100. Positions 155-169 are linker; sequence KESSCSINVDTETEL. Residues 170–272 are domain B; sequence MEPFPLKQWL…SITVDSLANK (103 aa).

It belongs to the 3-HAO family. Fe(2+) serves as cofactor.

The protein localises to the cytoplasm. The enzyme catalyses 3-hydroxyanthranilate + O2 = (2Z,4Z)-2-amino-3-carboxymuconate 6-semialdehyde. It participates in cofactor biosynthesis; NAD(+) biosynthesis; quinolinate from L-kynurenine: step 3/3. Catalyzes the oxidative ring opening of 3-hydroxyanthranilate to 2-amino-3-carboxymuconate semialdehyde, which spontaneously cyclizes to quinolinate. This Nematostella vectensis (Starlet sea anemone) protein is 3-hydroxyanthranilate 3,4-dioxygenase.